Reading from the N-terminus, the 868-residue chain is Leucine--tRNA ligase (868 aa).

Positions 42–52 match the 'HIGH' region motif; that stretch reads PYPSGKLHMGH. A 'KMSKS' region motif is present at residues 627–631; it reads KMSKS. Lysine 630 contributes to the ATP binding site.

The protein belongs to the class-I aminoacyl-tRNA synthetase family.

The protein resides in the cytoplasm. The catalysed reaction is tRNA(Leu) + L-leucine + ATP = L-leucyl-tRNA(Leu) + AMP + diphosphate. This chain is Leucine--tRNA ligase, found in Pseudomonas putida (strain GB-1).